The primary structure comprises 71 residues: Metallothionein-like protein 1 (71 aa).

It belongs to the metallothionein superfamily. Type 15 family.

Its function is as follows. Metallothioneins have a high content of cysteine residues that bind various heavy metals. The polypeptide is Metallothionein-like protein 1 (MT1) (Casuarina glauca (Swamp oak)).